The sequence spans 94 residues: MSRSIKKGPFADASLLKKVDAQADADKKQVIKTWSRRSTIFPSFVGLTIAVYDGRKHVPVYITEDMVGHKLGEFVPTRTFHGHKSTDDKATSQS.

The protein belongs to the universal ribosomal protein uS19 family.

Functionally, protein S19 forms a complex with S13 that binds strongly to the 16S ribosomal RNA. This is Small ribosomal subunit protein uS19 (rpsS) from Lactobacillus acidophilus (strain ATCC 700396 / NCK56 / N2 / NCFM).